Consider the following 175-residue polypeptide: uncharacterized protein (175 aa).

The N-terminal 11 residues, 1 to 11, are a transit peptide targeting the mitochondrion; sequence METWRKGSFRN. Residues 24–92 form a disordered region; the sequence is RRLRRQSSVL…PRLYRESSSC (69 aa). The segment covering 41-63 has biased composition (basic and acidic residues); the sequence is GDHEEYSNREVIRELQGRPDGRR.

Its subcellular location is the mitochondrion. This is an uncharacterized protein from Homo sapiens (Human).